Here is a 309-residue protein sequence, read N- to C-terminus: Anamorsin (309 aa).

Residues 6-172 (ISPGQLVAVF…KPNFEVGSSS (167 aa)) are N-terminal SAM-like domain. The segment at 173 to 222 (QLKLPNKKSSSVKPVVDPAAAKLWTLSANDMEDDSVDLIDSDELLDPEDL) is linker. Ser-182, Ser-183, and Ser-213 each carry phosphoserine. [2Fe-2S] cluster-binding residues include Cys-235, Cys-244, Cys-247, and Cys-249. The tract at residues 235 to 249 (CGEGKKRKACKNCTC) is fe-S binding site A. At Ser-269 the chain carries Phosphoserine. [4Fe-4S] cluster contacts are provided by Cys-271, Cys-274, Cys-282, and Cys-285. 2 short sequence motifs (cx2C motif) span residues 271-274 (CGNC) and 282-285 (CANC). Residues 271–285 (CGNCYLGDAFRCANC) are fe-S binding site B. 2 positions are modified to phosphoserine: Ser-302 and Ser-304.

This sequence belongs to the anamorsin family. As to quaternary structure, monomer. Interacts with NDOR1. Interacts with CHCHD4. [2Fe-2S] cluster serves as cofactor. Requires [4Fe-4S] cluster as cofactor.

Its subcellular location is the cytoplasm. The protein localises to the nucleus. It localises to the mitochondrion intermembrane space. Functionally, component of the cytosolic iron-sulfur (Fe-S) protein assembly (CIA) machinery required for the maturation of extramitochondrial Fe-S proteins. Part of an electron transfer chain functioning in an early step of cytosolic Fe-S biogenesis, facilitating the de novo assembly of a [4Fe-4S] cluster on the scaffold complex NUBP1-NUBP2. Electrons are transferred to CIAPIN1 from NADPH via the FAD- and FMN-containing protein NDOR1. NDOR1-CIAPIN1 are also required for the assembly of the diferric tyrosyl radical cofactor of ribonucleotide reductase (RNR), probably by providing electrons for reduction during radical cofactor maturation in the catalytic small subunit. Has anti-apoptotic effects in the cell. Involved in negative control of cell death upon cytokine withdrawal. Promotes development of hematopoietic cells. This Mus musculus (Mouse) protein is Anamorsin.